Reading from the N-terminus, the 347-residue chain is Spermidine/putrescine import ATP-binding protein PotA (347 aa).

The ABC transporter domain maps to 6-236 (IELRDISKHY…PKNSFVAKFI (231 aa)). 38 to 45 (GPSGCGKT) contributes to the ATP binding site.

This sequence belongs to the ABC transporter superfamily. Spermidine/putrescine importer (TC 3.A.1.11.1) family. The complex is composed of two ATP-binding proteins (PotA), two transmembrane proteins (PotB and PotC) and a solute-binding protein (PotD).

The protein localises to the cell membrane. The enzyme catalyses ATP + H2O + polyamine-[polyamine-binding protein]Side 1 = ADP + phosphate + polyamineSide 2 + [polyamine-binding protein]Side 1.. In terms of biological role, part of the ABC transporter complex PotABCD involved in spermidine/putrescine import. Responsible for energy coupling to the transport system. In Clostridioides difficile (strain 630) (Peptoclostridium difficile), this protein is Spermidine/putrescine import ATP-binding protein PotA.